A 1285-amino-acid polypeptide reads, in one-letter code: ABC-type transporter fsqE (1285 aa).

An ABC transmembrane type-1 1 domain is found at 54 to 343 (VSSICAVLAG…IAPSAQALLS (290 aa)). The next 6 membrane-spanning stretches (helical) occupy residues 57–77 (ICAV…GLLV), 102–122 (LYYV…TVGF), 176–196 (LAVM…AFIM), 203–223 (IISP…AYMV), 281–301 (VAGM…LAFW), and 312–332 (MSVA…FAII). The region spanning 380 to 622 (LDRVGLIYPS…NGAYAALVQK (243 aa)) is the ABC transporter 1 domain. 413–420 (GSSGSGKS) lines the ATP pocket. An N-linked (GlcNAc...) asparagine glycan is attached at N467. The interval 627–654 (DTHDHKAPDGARLSIEDDDDEDSRYGGN) is disordered. 6 helical membrane-spanning segments follow: residues 707–727 (LFGL…SVFF), 753–773 (GLYV…EIAL), 831–851 (GILT…AIGW), 855–875 (LVCT…LQVL), 931–951 (ILLA…CAAL), and 968–988 (FQVY…GSIF). The 284-residue stretch at 713 to 996 (AILAGLTIPV…IFTYAPDASK (284 aa)) folds into the ABC transmembrane type-1 2 domain. N-linked (GlcNAc...) asparagine glycosylation is present at N1037. Positions 1043–1281 (VEFEHVSFTY…RGKYWEMVSM (239 aa)) constitute an ABC transporter 2 domain. 1078–1085 (GQSGSGKS) is a binding site for ATP. N1138 carries an N-linked (GlcNAc...) asparagine glycan.

The protein belongs to the ABC transporter superfamily. ABCB family. Multidrug resistance exporter (TC 3.A.1.201) subfamily.

It localises to the membrane. Its pathway is secondary metabolite biosynthesis. Its function is as follows. ABC-type transporter; part of the gene cluster that mediates the biosynthesis of the isoquinoline alkaloids fumisoquin A, fumisoquin B and fumisoquin C; as well as small amounts of fumipyrrole as a shunt metabolite. The products of the cluster lead to a brown coloration and are important for growth and conidiation. FsqE possibly plays a role of self-protection. This Aspergillus fumigatus (strain ATCC MYA-4609 / CBS 101355 / FGSC A1100 / Af293) (Neosartorya fumigata) protein is ABC-type transporter fsqE.